The primary structure comprises 296 residues: Nucleotide-binding protein M28_Spy0517 (296 aa).

13–20 is a binding site for ATP; the sequence is GMSGAGKT. Residue 63–66 coordinates GTP; the sequence is DMRS.

This sequence belongs to the RapZ-like family.

Functionally, displays ATPase and GTPase activities. The sequence is that of Nucleotide-binding protein M28_Spy0517 from Streptococcus pyogenes serotype M28 (strain MGAS6180).